A 127-amino-acid polypeptide reads, in one-letter code: MSYRKLGRTSSQRKALLRDLTTDLLINERIVTTEARAKEVRSTAEKMITLGKRGDLHARRQAAAYVRNEIASVEEQDDNSVVVKSALQKLFSDLAPKYADRKGGYTRILKTAPRRGDGAPMVIIELV.

This sequence belongs to the bacterial ribosomal protein bL17 family. As to quaternary structure, part of the 50S ribosomal subunit. Contacts protein L32.

This is Large ribosomal subunit protein bL17 from Lacticaseibacillus casei (strain BL23) (Lactobacillus casei).